The chain runs to 907 residues: Polyphosphoinositide phosphatase (907 aa).

An SAC domain is found at 154 to 547 (FQNVDLSSNF…GDTLSLQYGG (394 aa)). The tract at residues 707-790 (GIDPSPFTVR…MTDTGDSAKA (84 aa)) is disordered. Acidic residues predominate over residues 758–770 (SEDDSGTDREDEG).

In terms of assembly, component of the PI(3,5)P2 regulatory complex/PAS complex, at least composed of PIKFYVE, FIG4 and VAC14. VAC14 nucleates the assembly of the complex and serves as a scaffold by pentamerizing into a star-shaped structure, which can bind a single copy each of PIKFYVE and FIG4 and coordinates their activities. As to expression, wide-spread.

It localises to the endosome membrane. The catalysed reaction is a 1,2-diacyl-sn-glycero-3-phospho-(1D-myo-inositol-3,5-bisphosphate) + H2O = a 1,2-diacyl-sn-glycero-3-phospho-(1D-myo-inositol-3-phosphate) + phosphate. It carries out the reaction a 1,2-diacyl-sn-glycero-3-phospho-(1D-myo-inositol-4,5-bisphosphate) + H2O = a 1,2-diacyl-sn-glycero-3-phospho-(1D-myo-inositol 4-phosphate) + phosphate. It catalyses the reaction a 1,2-diacyl-sn-glycero-3-phospho-(1D-myo-inositol-3,4,5-trisphosphate) + H2O = a 1,2-diacyl-sn-glycero-3-phospho-(1D-myo-inositol-3,4-bisphosphate) + phosphate. The enzyme catalyses O-phospho-L-seryl-[protein] + H2O = L-seryl-[protein] + phosphate. Functionally, the PI(3,5)P2 regulatory complex regulates both the synthesis and turnover of phosphatidylinositol 3,5-bisphosphate (PtdIns(3,5)P2). In vitro, hydrolyzes all three D5-phosphorylated polyphosphoinositide substrates in the order PtdIns(4,5)P2 &gt; PtdIns(3,5)P2 &gt; PtdIns(3,4,5)P3. Plays a role in the biogenesis of endosome carrier vesicles (ECV) / multivesicular bodies (MVB) transport intermediates from early endosomes. In terms of biological role, dual specificity phosphatase component of the PI(3,5)P2 regulatory complex which regulates both the synthesis and turnover of phosphatidylinositol 3,5-bisphosphate (PtdIns(3,5)P2). Catalyzes the dephosphorylation of phosphatidylinositol 3,5-bisphosphate (PtdIns(3,5)P2) to form phosphatidylinositol 3-phosphate. Has serine-protein phosphatase activity acting on PIKfyve to stimulate its lipid kinase activity, its catalytically activity being required for maximal PI(3,5)P2 production. In vitro, hydrolyzes all three D5-phosphorylated polyphosphoinositide and although displaying preferences for PtdIns(3,5)P2, it is capable of hydrolyzing PtdIns(3,4,5)P3 and PtdIns(4,5)P2, at least in vitro. The polypeptide is Polyphosphoinositide phosphatase (Fig4) (Mus musculus (Mouse)).